Here is a 94-residue protein sequence, read N- to C-terminus: Co-chaperonin GroES (94 aa).

Belongs to the GroES chaperonin family. Heptamer of 7 subunits arranged in a ring. Interacts with the chaperonin GroEL.

It is found in the cytoplasm. Its function is as follows. Together with the chaperonin GroEL, plays an essential role in assisting protein folding. The GroEL-GroES system forms a nano-cage that allows encapsulation of the non-native substrate proteins and provides a physical environment optimized to promote and accelerate protein folding. GroES binds to the apical surface of the GroEL ring, thereby capping the opening of the GroEL channel. This chain is Co-chaperonin GroES, found in Alkaliphilus oremlandii (strain OhILAs) (Clostridium oremlandii (strain OhILAs)).